We begin with the raw amino-acid sequence, 267 residues long: MAVVNGNYIPGRLDGRVAVVTGSGRGIGAAIAVHLGRLGANIVVNYANSALDAQKVVDQIKGAGSEAIAIKADIRDVSQIMRLFDEAVAHFGHVDIAVSNSGVVSFGHLKDVTEEEFDRVFSLNTRGQFFVAREAYRHLSEGGRIIMTSSNTSKDFSVPRHSLYSGSKGAVDSFVRIFSKDCGDKKITVNGVAPGGTVTDMFHDVSHHYIPDGEKYTAEQRQQMAAFASPLHRNGFPEDIANVVGFLASKEGEWINGKVINLDGGAA.

Positions 27, 73, 100, and 133 each coordinate NADP(+). Active-site proton donor residues include Ser149 and Ser150. NADP(+) is bound by residues Tyr164, Lys168, and Thr199. Tyr164 functions as the Proton acceptor in the catalytic mechanism. The Lowers pKa of active site Tyr role is filled by Lys168.

Belongs to the short-chain dehydrogenases/reductases (SDR) family.

It functions in the pathway pigment biosynthesis. In terms of biological role, non-reducing polyketide synthase; part of the gene cluster that mediates the biosynthesis of the bianthraquinone cladofulvin, a conidial pigment not required for virulence but that plays a role in fitness and resistance to environmental stresses including UV light and low-temperature stress. The pathway begins with the synthesis of atrochrysone thioester by the polyketide synthase (PKS) claG. The atrochrysone carboxyl ACP thioesterase claF then breaks the thioester bond and releases the atrochrysone carboxylic acid from claG. This compound is decarboxylated by claH to yield emodin, which is further converted to chrysophanol hydroquinone by the reductase claC and the dehydratase claB. The cytochrome monooxygenase P450 claM then catalyzes the dimerization of nataloe-emodin to cladofulvin. The polypeptide is Short chain dehydrogenase claC (Passalora fulva (Tomato leaf mold)).